Here is a 399-residue protein sequence, read N- to C-terminus: Probable sugar efflux transporter (399 aa).

12 helical membrane-spanning segments follow: residues 15–35 (VVTLAIAAFIFNTTEFAPVGL), 50–70 (VGMMLTIYAWVVALMSLPFML), 81–101 (LIGLFILFIASHVLSFFAWSF), 103–123 (VLVISRIGIAFAHAVFWSITS), 136–156 (AQALSLIATGTALAMVFGIPI), 168–188 (MTFLAIGLGALATLACLVKLL), 209–229 (PALVSVYILTVVVVTAHYTAY), 246–266 (FATVLLLILGGAGIIGSILFG), 273–293 (ASGLISIAIGLLLACLLLLLP), 301–321 (LMLLSIFWGVAIMIIGLGMQV), 333–353 (VAMSLFSGIFNIGIGAGALVG), and 364–384 (SIGYIGAIPALAALVWSLMIF).

The protein belongs to the major facilitator superfamily. SotB (TC 2.A.1.2) family.

It localises to the cell inner membrane. Its function is as follows. Involved in the efflux of sugars. The physiological role may be the reduction of the intracellular concentration of toxic sugars or sugar metabolites. The sequence is that of Probable sugar efflux transporter from Klebsiella pneumoniae (strain 342).